The primary structure comprises 464 residues: Soluble pyridine nucleotide transhydrogenase (464 aa).

35 to 44 provides a ligand contact to FAD; it reads DSRRQVGGNC.

This sequence belongs to the class-I pyridine nucleotide-disulfide oxidoreductase family. FAD serves as cofactor.

The protein resides in the cytoplasm. It carries out the reaction NAD(+) + NADPH = NADH + NADP(+). Its function is as follows. Conversion of NADPH, generated by peripheral catabolic pathways, to NADH, which can enter the respiratory chain for energy generation. The chain is Soluble pyridine nucleotide transhydrogenase from Pseudomonas entomophila (strain L48).